Reading from the N-terminus, the 98-residue chain is Small ribosomal subunit protein bS6c (98 aa).

The protein belongs to the bacterial ribosomal protein bS6 family.

The protein localises to the plastid. The protein resides in the chloroplast. Functionally, binds together with bS18 to 16S ribosomal RNA. This Phaeodactylum tricornutum (strain CCAP 1055/1) protein is Small ribosomal subunit protein bS6c.